A 291-amino-acid chain; its full sequence is Acetylglutamate kinase (291 aa).

Residues 64–65 (GG), Arg-86, and Asn-190 each bind substrate.

It belongs to the acetylglutamate kinase family. ArgB subfamily.

The protein resides in the cytoplasm. The catalysed reaction is N-acetyl-L-glutamate + ATP = N-acetyl-L-glutamyl 5-phosphate + ADP. It functions in the pathway amino-acid biosynthesis; L-arginine biosynthesis; N(2)-acetyl-L-ornithine from L-glutamate: step 2/4. Catalyzes the ATP-dependent phosphorylation of N-acetyl-L-glutamate. The sequence is that of Acetylglutamate kinase from Leptospira borgpetersenii serovar Hardjo-bovis (strain JB197).